An 80-amino-acid polypeptide reads, in one-letter code: Small ribosomal subunit protein uS17 (80 aa).

This sequence belongs to the universal ribosomal protein uS17 family. Part of the 30S ribosomal subunit.

One of the primary rRNA binding proteins, it binds specifically to the 5'-end of 16S ribosomal RNA. This chain is Small ribosomal subunit protein uS17, found in Cereibacter sphaeroides (strain ATCC 17025 / ATH 2.4.3) (Rhodobacter sphaeroides).